A 488-amino-acid polypeptide reads, in one-letter code: MQQFQLYINGKFEDGAAQFDSINPATGEIWAKMPEARTDQVNRAVDAAEQAFYDSSWSGLTASQRGKLLYKLADLVEKSAPRLAALETTDTGKIIRETSSQIAYVAEYYRYYAGLADKIEGSFIPVDKPDMQAWLVREPVGVVAAIVPWNSQLFLSAVKVGPALAAGCTVVLKASEEAPAPLLEFAKLIDEAGFPAGVVNVITGFGPECGAVLSAHPKVAHIAFTGGPETAKHIVRNSAENLAKVSLELGGKSPFIVFADTDINSALNAQIAAIFAATGQSCVAGSRLLIEESIKDEFLQRLAERVQSIKMGLPDDMQTEYGPLCTLKQREKIQQVVQRSVEQGAKLITGGQVCDGAGYYYPPTILDCSGVSDAQSIHTELFGPVLSVDTFSTEAEAIQKANSTPYGLASGVFTSNLTRAHRMTRAIRSGIVWLNTYRVVSPLAPFGGYGLSGHGREGGLSAALEYTTTKTVWLRMSDQPIDDPFVMR.

Residues W149–N150 and G226–G227 contribute to the NAD(+) site. E248 acts as the Proton acceptor in catalysis. L249 contacts NAD(+). C282 functions as the Nucleophile in the catalytic mechanism. Residue E380 coordinates NAD(+).

This sequence belongs to the aldehyde dehydrogenase family. In terms of assembly, homodimer.

It carries out the reaction (Z)-2-((N-methylformamido)methylene)-5-hydroxybutanolactone + NAD(+) + H2O = (E)-2-((N-methylformamido) methylene)succinate + NADH + 3 H(+). Functionally, involved in the degradation of the pyridine ring of trigonelline (TG; N-methylnicotinate) into succinate and methylamine as carbon and nitrogen sources, respectively. Catalyzes the NAD(+)-dependent oxidation of (Z)-2-((N-methylformamido)methylene)-5-hydroxybutyrolactone (MFMB) to yield (E)-2-((N-methylformamido)methylene)succinate (MFMS). In Acinetobacter baylyi (strain ATCC 33305 / BD413 / ADP1), this protein is (Z)-2-((N-methylformamido)methylene)-5-hydroxybutyrolactone dehydrogenase.